The chain runs to 1095 residues: DNA-directed RNA polymerase subunit beta (1095 aa).

Residues 1069–1095 (DLMQDVNPRRSTPSRPTYESLGKEYEE) form a disordered region.

It belongs to the RNA polymerase beta chain family. In cyanobacteria the RNAP catalytic core is composed of 2 alpha, 1 beta, 1 beta', 1 gamma and 1 omega subunit. When a sigma factor is associated with the core the holoenzyme is formed, which can initiate transcription.

The catalysed reaction is RNA(n) + a ribonucleoside 5'-triphosphate = RNA(n+1) + diphosphate. DNA-dependent RNA polymerase catalyzes the transcription of DNA into RNA using the four ribonucleoside triphosphates as substrates. This chain is DNA-directed RNA polymerase subunit beta, found in Prochlorococcus marinus (strain NATL2A).